Here is a 688-residue protein sequence, read N- to C-terminus: Polyribonucleotide nucleotidyltransferase (688 aa).

The Mg(2+) site is built by Asp-484 and Asp-490. The KH domain occupies 550–609 (PTTEIFNVAPDKIIEIIGQGGRVIREIVEKFEVKIDLNKPSGEVKIMGNKERVLKTKEFI). Residues 626–688 (DEVLEAQVKR…NKGKIALDLA (63 aa)) enclose the S1 motif domain.

The protein belongs to the polyribonucleotide nucleotidyltransferase family. The cofactor is Mg(2+).

It is found in the cytoplasm. The catalysed reaction is RNA(n+1) + phosphate = RNA(n) + a ribonucleoside 5'-diphosphate. Involved in mRNA degradation. Catalyzes the phosphorolysis of single-stranded polyribonucleotides processively in the 3'- to 5'-direction. This chain is Polyribonucleotide nucleotidyltransferase, found in Helicobacter acinonychis (strain Sheeba).